The sequence spans 475 residues: ATP synthase subunit beta, chloroplastic (475 aa).

Position 155–162 (155–162 (GGAGVGKT)) interacts with ATP.

This sequence belongs to the ATPase alpha/beta chains family. In terms of assembly, F-type ATPases have 2 components, CF(1) - the catalytic core - and CF(0) - the membrane proton channel. CF(1) has five subunits: alpha(3), beta(3), gamma(1), delta(1), epsilon(1). CF(0) has four main subunits: a(1), b(1), b'(1) and c(9-12).

The protein localises to the plastid. Its subcellular location is the chloroplast thylakoid membrane. It catalyses the reaction ATP + H2O + 4 H(+)(in) = ADP + phosphate + 5 H(+)(out). Produces ATP from ADP in the presence of a proton gradient across the membrane. The catalytic sites are hosted primarily by the beta subunits. This chain is ATP synthase subunit beta, chloroplastic, found in Ochrosphaera neapolitana.